We begin with the raw amino-acid sequence, 227 residues long: Protein LppM (227 aa).

An N-terminal signal peptide occupies residues 1-24 (MARTRRRGMLAIAMLLMLVPLATG). Cys25 is lipidated: N-palmitoyl cysteine. A lipid anchor (S-diacylglycerol cysteine) is attached at Cys25. An important for bacterial uptake by host macrophages region spans residues 26 to 185 (LRVRASITIS…ARYTDPNTRS (160 aa)). The helical transmembrane segment at 190-210 (GIWLGIAAFAAAGVVAVLAWI) threads the bilayer.

Post-translationally, a shorter form (about 20 kDa) is secreted; upon overexpression of the whole protein in M.smegmatis the C-terminus of the short form is about residue 187, suggesting it is generated by cleavage of the protein before its C-terminal transmembrane domain.

The protein localises to the membrane. It is found in the secreted. It localises to the cell wall. In terms of biological role, a putative lipoprotein that seems to be specialized for the initial steps of macrophage infection. A non-acylated fragment (residues 26-185) binds phosphatidyl-myo-inositol mannosides (PIMs). Limits, in a TLR2-dependent fashion, bacterial uptake by host (mouse); this effect may be mediated by nonacylated fragment 26-185. Plays a TLR2-dependent role in host phagosome maturation arrest. Plays a TLR2-independent role in chemokine production during the first 24 hours of mouse infection. The sequence is that of Protein LppM (lppM) from Mycobacterium tuberculosis (strain ATCC 25618 / H37Rv).